The chain runs to 442 residues: uncharacterized protein (442 aa).

The disordered stretch occupies residues 211–269 (LDYSTDKPEDSESEDIELEDSESEDSESEDIDQHGGQGPDDDEFNANFDDPQFDEFDFG). Positions 221–240 (SESEDIELEDSESEDSESED) are enriched in acidic residues.

It localises to the virion. This is an uncharacterized protein from Acanthamoeba polyphaga (Amoeba).